The primary structure comprises 370 residues: NSFL1 cofactor p47 (370 aa).

The disordered stretch occupies residues 54 to 73 (SQATPSSVSRGTAPSDNRVT). Phosphoserine is present on residues Ser-74, Ser-102, and Ser-114. 2 disordered regions span residues 80 to 116 (HDQD…KSPN) and 138 to 157 (TKSP…GYRL). The Nuclear localization signal motif lies at 109–115 (PPRKKSP). Residue Ser-140 is modified to Phosphoserine; by CDK1. At Tyr-167 the chain carries Phosphotyrosine. Residues 172–175 (RRRH) carry the Nuclear localization signal motif. 3 positions are modified to phosphoserine: Ser-176, Ser-192, and Ser-272. In terms of domain architecture, SEP spans 179-244 (DVHVVLKLWK…MEDHRDEDFV (66 aa)). The region spanning 291–368 (EAEPTTNIQI…NLLNAVIVQR (78 aa)) is the UBX domain.

Belongs to the NSFL1C family. As to quaternary structure, part of a ternary complex containing STX5A, NSFL1C and VCP. NSFL1C forms a homotrimer that binds to one end of a VCP homohexamer. The complex binds to membranes enriched in phosphatidylethanolamine-containing lipids and promotes Golgi membrane fusion. Interaction with VCIP135 leads to dissociation of the complex via ATP hydrolysis by VCP. Binds ubiquitin and mono-ubiquitinated proteins via its N-terminal UBA-like domain when bound to VCP. Post-translationally, phosphorylated during mitosis. Phosphorylation inhibits interaction with Golgi membranes and is required for the fragmentation of the Golgi stacks during mitosis. Highly expressed in heart, brain, spleen, lung, liver, muscle, kidney and testis.

Its subcellular location is the nucleus. It localises to the golgi apparatus. It is found in the golgi stack. The protein resides in the chromosome. The protein localises to the cytoplasm. Its subcellular location is the cytoskeleton. It localises to the microtubule organizing center. It is found in the centrosome. In terms of biological role, reduces the ATPase activity of VCP. Necessary for the fragmentation of Golgi stacks during mitosis and for VCP-mediated reassembly of Golgi stacks after mitosis. May play a role in VCP-mediated formation of transitional endoplasmic reticulum (tER). Inhibits the activity of CTSL (in vitro). Together with UBXN2B/p37, regulates the centrosomal levels of kinase AURKA/Aurora A during mitotic progression by promoting AURKA removal from centrosomes in prophase. Also, regulates spindle orientation during mitosis. The sequence is that of NSFL1 cofactor p47 (Nsfl1c) from Rattus norvegicus (Rat).